A 574-amino-acid chain; its full sequence is Ankyrin repeat protein B18 (574 aa).

6 ANK repeats span residues 56-87 (TGYT…DVTI), 135-164 (IKSR…DPNF), 167-213 (DGYT…NLNA), 217-249 (CGNT…NFEI), 253-285 (HGLT…NVGE), and 327-356 (EGKT…DINA). The region spanning 541 to 574 (KCLLTLLPSEIIYEILYMLTIYDLYNISYPPTKV) is the F-box domain.

The sequence is that of Ankyrin repeat protein B18 from Variola virus (isolate Human/India/Ind3/1967) (VARV).